The chain runs to 451 residues: Phosphoglucosamine mutase (451 aa).

Ser102 functions as the Phosphoserine intermediate in the catalytic mechanism. Mg(2+) is bound by residues Ser102, Asp242, Asp244, and Asp246. At Ser102 the chain carries Phosphoserine.

Belongs to the phosphohexose mutase family. Mg(2+) serves as cofactor. Activated by phosphorylation.

The catalysed reaction is alpha-D-glucosamine 1-phosphate = D-glucosamine 6-phosphate. Its function is as follows. Catalyzes the conversion of glucosamine-6-phosphate to glucosamine-1-phosphate. This chain is Phosphoglucosamine mutase, found in Staphylococcus epidermidis (strain ATCC 35984 / DSM 28319 / BCRC 17069 / CCUG 31568 / BM 3577 / RP62A).